The chain runs to 268 residues: Energy-coupling factor transporter transmembrane protein EcfT (268 aa).

5 helical membrane passes run 29 to 49 (VFIFLVFMFMTRDPLLLTVAV), 75 to 95 (IIIVLTFVLHLFMTGGGEVIV), 107 to 127 (LIEGFMLAMKLAMIITIASLL), 152 to 172 (LPTHELALMMSIALRFIPTLI), and 242 to 262 (WGLKDSVVLAVFLLFAAAVMA).

This sequence belongs to the energy-coupling factor EcfT family. In terms of assembly, forms a stable energy-coupling factor (ECF) transporter complex composed of 2 membrane-embedded substrate-binding proteins (S component), 2 ATP-binding proteins (A component) and 2 transmembrane proteins (T component). May be able to interact with more than 1 S component at a time.

It localises to the cell membrane. Functionally, transmembrane (T) component of an energy-coupling factor (ECF) ABC-transporter complex. Unlike classic ABC transporters this ECF transporter provides the energy necessary to transport a number of different substrates. The sequence is that of Energy-coupling factor transporter transmembrane protein EcfT from Bacillus selenitireducens (strain ATCC 700615 / DSM 15326 / MLS10).